The sequence spans 197 residues: CASP-like protein 0U1 (197 aa).

The Cytoplasmic portion of the chain corresponds to 1-13 (MDDFDPTVTNSPK). Residues 14-34 (FRLIAVQCLFSITAFAAMLSQ) traverse the membrane as a helical segment. Topologically, residues 35 to 63 (RHGLAGPDEMTLEECGPQACGYQKFSNFK) are extracellular. A helical membrane pass occupies residues 64-84 (FLIAVCIIYAVFSLVVMAAYL). At 85–99 (LQRVPPPVTELTAYT) the chain is on the cytoplasmic side. A helical membrane pass occupies residues 100–120 (VMNVLLFAAFAMSATSCNITI). The Extracellular segment spans residues 121–135 (VDPVYPVCKRATSAK). The helical transmembrane segment at 136-156 (ASIAFAFFTWLAVCFSMLFTY) threads the bilayer. At 157–197 (KEWRDVDYHVPGSGAYEFVPGVTSGSSRSSYPPQASSSSYA) the chain is on the cytoplasmic side. Residues 178–197 (VTSGSSRSSYPPQASSSSYA) form a disordered region. Over residues 180 to 197 (SGSSRSSYPPQASSSSYA) the composition is skewed to low complexity.

This sequence belongs to the Casparian strip membrane proteins (CASP) family. In terms of assembly, homodimer and heterodimers.

It is found in the cell membrane. The polypeptide is CASP-like protein 0U1 (Micromonas commoda (strain RCC299 / NOUM17 / CCMP2709) (Picoplanktonic green alga)).